A 375-amino-acid polypeptide reads, in one-letter code: Putative actin-26 (375 aa).

The protein belongs to the actin family.

Its subcellular location is the cytoplasm. The protein resides in the cytoskeleton. The enzyme catalyses ATP + H2O = ADP + phosphate + H(+). Functionally, actins are highly conserved proteins that are involved in various types of cell motility and are ubiquitously expressed in all eukaryotic cells. Multiple isoforms are involved in various cellular functions such as cytoskeleton structure, cell mobility, chromosome movement and muscle contraction. The protein is Putative actin-26 (act26) of Dictyostelium discoideum (Social amoeba).